Reading from the N-terminus, the 308-residue chain is tRNA pseudouridine synthase B (308 aa).

D47 functions as the Nucleophile in the catalytic mechanism.

Belongs to the pseudouridine synthase TruB family. Type 1 subfamily.

It catalyses the reaction uridine(55) in tRNA = pseudouridine(55) in tRNA. Responsible for synthesis of pseudouridine from uracil-55 in the psi GC loop of transfer RNAs. This chain is tRNA pseudouridine synthase B, found in Xanthomonas oryzae pv. oryzae (strain MAFF 311018).